Reading from the N-terminus, the 365-residue chain is DNA replication and repair protein RecF (365 aa).

30–37 (GLNAQGKT) lines the ATP pocket.

It belongs to the RecF family.

It localises to the cytoplasm. Its function is as follows. The RecF protein is involved in DNA metabolism; it is required for DNA replication and normal SOS inducibility. RecF binds preferentially to single-stranded, linear DNA. It also seems to bind ATP. This chain is DNA replication and repair protein RecF, found in Chlamydia trachomatis serovar A (strain ATCC VR-571B / DSM 19440 / HAR-13).